Here is a 420-residue protein sequence, read N- to C-terminus: Glutamate-1-semialdehyde 2,1-aminomutase (420 aa).

N6-(pyridoxal phosphate)lysine is present on lysine 261.

It belongs to the class-III pyridoxal-phosphate-dependent aminotransferase family. HemL subfamily. Requires pyridoxal 5'-phosphate as cofactor.

The protein localises to the cytoplasm. The catalysed reaction is (S)-4-amino-5-oxopentanoate = 5-aminolevulinate. The protein operates within porphyrin-containing compound metabolism; protoporphyrin-IX biosynthesis; 5-aminolevulinate from L-glutamyl-tRNA(Glu): step 2/2. The polypeptide is Glutamate-1-semialdehyde 2,1-aminomutase (Thermoplasma volcanium (strain ATCC 51530 / DSM 4299 / JCM 9571 / NBRC 15438 / GSS1)).